The chain runs to 184 residues: ATP synthase subunit delta (184 aa).

Belongs to the ATPase delta chain family. F-type ATPases have 2 components, F(1) - the catalytic core - and F(0) - the membrane proton channel. F(1) has five subunits: alpha(3), beta(3), gamma(1), delta(1), epsilon(1). CF(0) has four main subunits: a(1), b(1), b'(1) and c(10-14). The alpha and beta chains form an alternating ring which encloses part of the gamma chain. F(1) is attached to F(0) by a central stalk formed by the gamma and epsilon chains, while a peripheral stalk is formed by the delta, b and b' chains.

It localises to the cellular thylakoid membrane. Functionally, f(1)F(0) ATP synthase produces ATP from ADP in the presence of a proton or sodium gradient. F-type ATPases consist of two structural domains, F(1) containing the extramembraneous catalytic core and F(0) containing the membrane proton channel, linked together by a central stalk and a peripheral stalk. During catalysis, ATP synthesis in the catalytic domain of F(1) is coupled via a rotary mechanism of the central stalk subunits to proton translocation. Its function is as follows. This protein is part of the stalk that links CF(0) to CF(1). It either transmits conformational changes from CF(0) to CF(1) or is implicated in proton conduction. The sequence is that of ATP synthase subunit delta from Gloeothece citriformis (strain PCC 7424) (Cyanothece sp. (strain PCC 7424)).